We begin with the raw amino-acid sequence, 285 residues long: Glutamate racemase (285 aa).

Residues 30 to 31 (DS) and 62 to 63 (YG) contribute to the substrate site. Catalysis depends on Cys94, which acts as the Proton donor/acceptor. Position 95–96 (95–96 (NT)) interacts with substrate. Cys206 functions as the Proton donor/acceptor in the catalytic mechanism. A substrate-binding site is contributed by 207–208 (TH).

It belongs to the aspartate/glutamate racemases family.

The enzyme catalyses L-glutamate = D-glutamate. Its pathway is cell wall biogenesis; peptidoglycan biosynthesis. Provides the (R)-glutamate required for cell wall biosynthesis. This is Glutamate racemase from Pectobacterium atrosepticum (strain SCRI 1043 / ATCC BAA-672) (Erwinia carotovora subsp. atroseptica).